Reading from the N-terminus, the 83-residue chain is Apolipoprotein C-I, acidic form (83 aa).

The N-terminal stretch at 1-26 (MRLFLSLPVLVVVLSIVLEGPAPAQG) is a signal peptide.

It belongs to the apolipoprotein C1 family.

It is found in the secreted. The sequence is that of Apolipoprotein C-I, acidic form (APOC1A) from Pan paniscus (Pygmy chimpanzee).